Here is a 303-residue protein sequence, read N- to C-terminus: Putative S-adenosyl-L-methionine-dependent methyltransferase MAV_4435 (303 aa).

Residues D129 and 158–159 (DL) contribute to the S-adenosyl-L-methionine site.

This sequence belongs to the UPF0677 family.

Functionally, exhibits S-adenosyl-L-methionine-dependent methyltransferase activity. The protein is Putative S-adenosyl-L-methionine-dependent methyltransferase MAV_4435 of Mycobacterium avium (strain 104).